The sequence spans 1291 residues: DNA-directed RNA polymerase subunit beta (1291 aa).

This sequence belongs to the RNA polymerase beta chain family. The RNAP catalytic core consists of 2 alpha, 1 beta, 1 beta' and 1 omega subunit. When a sigma factor is associated with the core the holoenzyme is formed, which can initiate transcription.

It catalyses the reaction RNA(n) + a ribonucleoside 5'-triphosphate = RNA(n+1) + diphosphate. In terms of biological role, DNA-dependent RNA polymerase catalyzes the transcription of DNA into RNA using the four ribonucleoside triphosphates as substrates. The polypeptide is DNA-directed RNA polymerase subunit beta (Cytophaga hutchinsonii (strain ATCC 33406 / DSM 1761 / CIP 103989 / NBRC 15051 / NCIMB 9469 / D465)).